A 433-amino-acid polypeptide reads, in one-letter code: Enolase (433 aa).

A (2R)-2-phosphoglycerate-binding site is contributed by Gln167. Glu209 acts as the Proton donor in catalysis. Asp246, Glu291, and Asp318 together coordinate Mg(2+). (2R)-2-phosphoglycerate contacts are provided by Lys343, Arg372, Ser373, and Lys394. Lys343 functions as the Proton acceptor in the catalytic mechanism.

This sequence belongs to the enolase family. In terms of assembly, component of the RNA degradosome, a multiprotein complex involved in RNA processing and mRNA degradation. It depends on Mg(2+) as a cofactor.

The protein localises to the cytoplasm. It localises to the secreted. Its subcellular location is the cell surface. The enzyme catalyses (2R)-2-phosphoglycerate = phosphoenolpyruvate + H2O. It functions in the pathway carbohydrate degradation; glycolysis; pyruvate from D-glyceraldehyde 3-phosphate: step 4/5. In terms of biological role, catalyzes the reversible conversion of 2-phosphoglycerate (2-PG) into phosphoenolpyruvate (PEP). It is essential for the degradation of carbohydrates via glycolysis. The chain is Enolase from Sodalis glossinidius (strain morsitans).